We begin with the raw amino-acid sequence, 228 residues long: Phosphatidylserine decarboxylase proenzyme (228 aa).

The Schiff-base intermediate with substrate; via pyruvic acid role is filled by serine 197. Serine 197 bears the Pyruvic acid (Ser); by autocatalysis mark.

It belongs to the phosphatidylserine decarboxylase family. PSD-A subfamily. Heterodimer of a large membrane-associated beta subunit and a small pyruvoyl-containing alpha subunit. It depends on pyruvate as a cofactor. In terms of processing, is synthesized initially as an inactive proenzyme. Formation of the active enzyme involves a self-maturation process in which the active site pyruvoyl group is generated from an internal serine residue via an autocatalytic post-translational modification. Two non-identical subunits are generated from the proenzyme in this reaction, and the pyruvate is formed at the N-terminus of the alpha chain, which is derived from the carboxyl end of the proenzyme. The post-translation cleavage follows an unusual pathway, termed non-hydrolytic serinolysis, in which the side chain hydroxyl group of the serine supplies its oxygen atom to form the C-terminus of the beta chain, while the remainder of the serine residue undergoes an oxidative deamination to produce ammonia and the pyruvoyl prosthetic group on the alpha chain.

The protein resides in the cell membrane. It catalyses the reaction a 1,2-diacyl-sn-glycero-3-phospho-L-serine + H(+) = a 1,2-diacyl-sn-glycero-3-phosphoethanolamine + CO2. It participates in phospholipid metabolism; phosphatidylethanolamine biosynthesis; phosphatidylethanolamine from CDP-diacylglycerol: step 2/2. Its function is as follows. Catalyzes the formation of phosphatidylethanolamine (PtdEtn) from phosphatidylserine (PtdSer). The polypeptide is Phosphatidylserine decarboxylase proenzyme (Bacteroides thetaiotaomicron (strain ATCC 29148 / DSM 2079 / JCM 5827 / CCUG 10774 / NCTC 10582 / VPI-5482 / E50)).